A 136-amino-acid chain; its full sequence is Large ribosomal subunit protein uL16 (136 aa).

Belongs to the universal ribosomal protein uL16 family. In terms of assembly, part of the 50S ribosomal subunit.

Binds 23S rRNA and is also seen to make contacts with the A and possibly P site tRNAs. The chain is Large ribosomal subunit protein uL16 from Shewanella piezotolerans (strain WP3 / JCM 13877).